The following is a 69-amino-acid chain: Conotoxin Eb6.21 (69 aa).

The N-terminal stretch at 1–17 (VLIIAVLFLTACQLTTA) is a signal peptide. Residues 18–41 (ETYSRGRQKHRARRSTDKNSKWTR) constitute a propeptide that is removed on maturation. 3 disulfide bridges follow: Cys43–Cys57, Cys50–Cys61, and Cys56–Cys68.

Belongs to the conotoxin O1 superfamily. As to expression, expressed by the venom duct.

The protein resides in the secreted. This is Conotoxin Eb6.21 (E1) from Conus ebraeus (Hebrew cone).